Here is a 449-residue protein sequence, read N- to C-terminus: HSPB1-associated protein 1 homolog (449 aa).

One can recognise a JmjC domain in the interval Trp102–Thr266. The span at Asp385 to Leu395 shows a compositional bias: basic and acidic residues. The disordered stretch occupies residues Asp385 to Met416. Positions Gly396 to Pro410 are enriched in polar residues.

The protein resides in the cytoplasm. Its function is as follows. May play a role in cellular stress response. This chain is HSPB1-associated protein 1 homolog (hspbap1), found in Danio rerio (Zebrafish).